The sequence spans 177 residues: Large ribosomal subunit protein uL5 (177 aa).

The protein belongs to the universal ribosomal protein uL5 family. Part of the 50S ribosomal subunit; part of the 5S rRNA/L5/L18/L25 subcomplex. Contacts the 5S rRNA and the P site tRNA. Forms a bridge to the 30S subunit in the 70S ribosome.

In terms of biological role, this is one of the proteins that bind and probably mediate the attachment of the 5S RNA into the large ribosomal subunit, where it forms part of the central protuberance. In the 70S ribosome it contacts protein S13 of the 30S subunit (bridge B1b), connecting the 2 subunits; this bridge is implicated in subunit movement. Contacts the P site tRNA; the 5S rRNA and some of its associated proteins might help stabilize positioning of ribosome-bound tRNAs. In Ehrlichia canis (strain Jake), this protein is Large ribosomal subunit protein uL5.